The sequence spans 499 residues: Putative alpha-galactosidase 8 (499 aa).

2 N-linked (GlcNAc...) asparagine glycosylation sites follow: asparagine 154 and asparagine 191. Catalysis depends on aspartate 238, which acts as the Nucleophile. Residue asparagine 256 is glycosylated (N-linked (GlcNAc...) asparagine). The active-site Proton donor is the aspartate 303.

It belongs to the glycosyl hydrolase 27 family.

It localises to the secreted. It catalyses the reaction Hydrolysis of terminal, non-reducing alpha-D-galactose residues in alpha-D-galactosides, including galactose oligosaccharides, galactomannans and galactolipids.. Putative alpha-galactosidase involved in the degradation of simple oligosaccharides like melibiose, raffinose and stachyose, and of polymeric galacto(gluco)mannans. This is Putative alpha-galactosidase 8 (agl8) from Emericella nidulans (strain FGSC A4 / ATCC 38163 / CBS 112.46 / NRRL 194 / M139) (Aspergillus nidulans).